The primary structure comprises 135 residues: Cytochrome c-type biogenesis protein CcmE (135 aa).

At 1-8 (MLLLRWKR) the chain is on the cytoplasmic side. Residues 9 to 29 (FWFLSLGILLFSGVVSLMLFN) form a helical; Signal-anchor for type II membrane protein membrane-spanning segment. Residues 30–135 (LSESISFFYL…EDFIKSVRGE (106 aa)) lie on the Periplasmic side of the membrane. The heme site is built by His118 and Tyr122.

This sequence belongs to the CcmE/CycJ family.

The protein localises to the cell inner membrane. Functionally, heme chaperone required for the biogenesis of c-type cytochromes. Transiently binds heme delivered by CcmC and transfers the heme to apo-cytochromes in a process facilitated by CcmF and CcmH. The sequence is that of Cytochrome c-type biogenesis protein CcmE from Neorickettsia sennetsu (strain ATCC VR-367 / Miyayama) (Ehrlichia sennetsu).